Reading from the N-terminus, the 103-residue chain is Spherulin-3A (103 aa).

Residues 1 to 13 are N-terminal arm; the sequence is MSVCKGVSGNPAK. Beta/gamma crystallin 'Greek key' domains follow at residues 14–55 and 57–99; these read GEVF…KVGP and TKAF…IVAT.

The protein belongs to the beta/gamma-crystallin family.

It is found in the cytoplasm. Functionally, structural protein. This chain is Spherulin-3A, found in Physarum polycephalum (Slime mold).